The following is a 53-amino-acid chain: Large ribosomal subunit protein bL32c (53 aa).

The segment at 1–21 (MAVPKKRTSKSKKKSRRSHWI) is disordered.

Belongs to the bacterial ribosomal protein bL32 family.

Its subcellular location is the plastid. It is found in the chloroplast. In Cyanidium caldarium (Red alga), this protein is Large ribosomal subunit protein bL32c (rpl32).